The chain runs to 341 residues: S-adenosylmethionine:tRNA ribosyltransferase-isomerase (341 aa).

The protein belongs to the QueA family. As to quaternary structure, monomer.

The protein resides in the cytoplasm. The catalysed reaction is 7-aminomethyl-7-carbaguanosine(34) in tRNA + S-adenosyl-L-methionine = epoxyqueuosine(34) in tRNA + adenine + L-methionine + 2 H(+). Its pathway is tRNA modification; tRNA-queuosine biosynthesis. In terms of biological role, transfers and isomerizes the ribose moiety from AdoMet to the 7-aminomethyl group of 7-deazaguanine (preQ1-tRNA) to give epoxyqueuosine (oQ-tRNA). The protein is S-adenosylmethionine:tRNA ribosyltransferase-isomerase of Clostridioides difficile (strain 630) (Peptoclostridium difficile).